The sequence spans 358 residues: Putative zinc metalloprotease RC0203 (358 aa).

Position 18 (histidine 18) interacts with Zn(2+). Glutamate 19 is an active-site residue. Position 22 (histidine 22) interacts with Zn(2+). 4 helical membrane-spanning segments follow: residues 52-71 (GVRWKICLIPLGGYVKIYGY), 97-119 (FLIVAAGPLINYLLAIIIFAGFY), 285-307 (YLLFIAMLSVNLGLLNLLPIPVL), and 332-351 (ILLQLGAIIIIFLIIIAVSN). In terms of domain architecture, PDZ spans 102-186 (AGPLINYLLA…STLTIERKSE (85 aa)).

The protein belongs to the peptidase M50B family. Zn(2+) serves as cofactor.

It localises to the cell inner membrane. The sequence is that of Putative zinc metalloprotease RC0203 from Rickettsia conorii (strain ATCC VR-613 / Malish 7).